The chain runs to 286 residues: Putative electron transfer flavoprotein subunit YgcQ (286 aa).

225–253 (VCIVVGASGAAALMAGVRNSKFVVAINHD) is a binding site for FAD.

Belongs to the ETF alpha-subunit/FixB family. YgcQ and YgcR form a heterodimer.

May play a role in a redox process. In Escherichia coli (strain K12), this protein is Putative electron transfer flavoprotein subunit YgcQ (ygcQ).